Reading from the N-terminus, the 351-residue chain is L-threonine 3-dehydrogenase (351 aa).

Cys39 serves as a coordination point for Zn(2+). Residues Thr41 and His44 each act as charge relay system in the active site. Zn(2+) is bound by residues His64, Glu65, Cys94, Cys97, Cys100, and Cys108. NAD(+)-binding positions include Ile176, Asp196, Arg201, 271 to 273 (LGI), and 295 to 296 (IY).

It belongs to the zinc-containing alcohol dehydrogenase family. In terms of assembly, homotetramer. The cofactor is Zn(2+).

The protein resides in the cytoplasm. It catalyses the reaction L-threonine + NAD(+) = (2S)-2-amino-3-oxobutanoate + NADH + H(+). Its pathway is amino-acid degradation; L-threonine degradation via oxydo-reductase pathway; glycine from L-threonine: step 1/2. Catalyzes the NAD(+)-dependent oxidation of L-threonine to 2-amino-3-ketobutyrate. The chain is L-threonine 3-dehydrogenase from Francisella tularensis subsp. mediasiatica (strain FSC147).